A 272-amino-acid polypeptide reads, in one-letter code: Tryptophan synthase alpha chain (272 aa).

Catalysis depends on proton acceptor residues Glu49 and Glu60.

This sequence belongs to the TrpA family. As to quaternary structure, tetramer of two alpha and two beta chains.

The enzyme catalyses (1S,2R)-1-C-(indol-3-yl)glycerol 3-phosphate + L-serine = D-glyceraldehyde 3-phosphate + L-tryptophan + H2O. It functions in the pathway amino-acid biosynthesis; L-tryptophan biosynthesis; L-tryptophan from chorismate: step 5/5. Functionally, the alpha subunit is responsible for the aldol cleavage of indoleglycerol phosphate to indole and glyceraldehyde 3-phosphate. This chain is Tryptophan synthase alpha chain, found in Legionella pneumophila (strain Lens).